Here is an 84-residue protein sequence, read N- to C-terminus: Glutaredoxin (84 aa).

The Glutaredoxin domain occupies 1-84 (MPPVVIYTTA…AGKLDALLSA (84 aa)). An intrachain disulfide couples cysteine 12 to cysteine 15.

This sequence belongs to the glutaredoxin family. In terms of assembly, monomer.

Its subcellular location is the cytoplasm. Its function is as follows. Has a glutathione-disulfide oxidoreductase activity in the presence of NADPH and glutathione reductase. Reduces low molecular weight disulfides and proteins. The polypeptide is Glutaredoxin (grx) (Pseudomonas aeruginosa (strain ATCC 15692 / DSM 22644 / CIP 104116 / JCM 14847 / LMG 12228 / 1C / PRS 101 / PAO1)).